The chain runs to 274 residues: Exosome complex component Rrp42 (274 aa).

The protein belongs to the RNase PH family. Rrp42 subfamily. In terms of assembly, component of the archaeal exosome complex. Forms a hexameric ring-like arrangement composed of 3 Rrp41-Rrp42 heterodimers. The hexameric ring associates with a trimer of Rrp4 and/or Csl4 subunits.

The protein localises to the cytoplasm. Non-catalytic component of the exosome, which is a complex involved in RNA degradation. Contributes to the structuring of the Rrp41 active site. The polypeptide is Exosome complex component Rrp42 (Pyrococcus abyssi (strain GE5 / Orsay)).